The sequence spans 1376 residues: DNA-directed RNA polymerase subunit beta'' (1376 aa).

Zn(2+) is bound by residues Cys220, Cys293, Cys300, and Cys303.

This sequence belongs to the RNA polymerase beta' chain family. RpoC2 subfamily. As to quaternary structure, in plastids the minimal PEP RNA polymerase catalytic core is composed of four subunits: alpha, beta, beta', and beta''. When a (nuclear-encoded) sigma factor is associated with the core the holoenzyme is formed, which can initiate transcription. Requires Zn(2+) as cofactor.

Its subcellular location is the plastid. The protein resides in the chloroplast. It catalyses the reaction RNA(n) + a ribonucleoside 5'-triphosphate = RNA(n+1) + diphosphate. In terms of biological role, DNA-dependent RNA polymerase catalyzes the transcription of DNA into RNA using the four ribonucleoside triphosphates as substrates. This chain is DNA-directed RNA polymerase subunit beta'', found in Arabidopsis thaliana (Mouse-ear cress).